A 312-amino-acid polypeptide reads, in one-letter code: Taste receptor type 2 member 103 (312 aa).

At 1–16 (MVVTMRAALRLMLIST) the chain is on the extracellular side. The chain crosses the membrane as a helical span at residues 17 to 37 (VSLELIIGILANVFIALVNII). The Cytoplasmic portion of the chain corresponds to 38 to 65 (DWIKRGKISAVDKIYMGLAISRTAFVLS). Residues 66–86 (VITGFLIAFLDPASLGIGIMI) traverse the membrane as a helical segment. The Extracellular segment spans residues 87–92 (RLLTMS). The helical transmembrane segment at 93–113 (WTVTNHFSVWFATCLSIFYFL) threads the bilayer. Over 114-133 (KITNFSNTVFLALKWKVKKV) the chain is Cytoplasmic. A helical membrane pass occupies residues 134 to 154 (VSVTLVVSLIILFINVIVIHI). The Extracellular portion of the chain corresponds to 155–184 (YTDRFQVNMVQKCGANNTLRAYGLFLSIST). Asparagine 170 is a glycosylation site (N-linked (GlcNAc...) asparagine). A helical transmembrane segment spans residues 185–205 (VFTFIPFTASLTMFLLLIFSL). Residues 206–229 (WRHLKTMHHNATGSRDVSTVAHIK) are Cytoplasmic-facing. The helical transmembrane segment at 230 to 250 (GLQTVVAFLLLYTVFAMSLFS) threads the bilayer. Residues 251 to 264 (QSLSIDAQHTNLLS) are Extracellular-facing. Residues 265 to 285 (HFLRCIGVAFPSGHSCALILG) form a helical membrane-spanning segment. The Cytoplasmic segment spans residues 286 to 312 (NNKLRQASLSVIFWLRCKYKHTENQGP).

Belongs to the G-protein coupled receptor T2R family.

It is found in the membrane. Gustducin-coupled receptor implicated in the perception of bitter compounds in the oral cavity and the gastrointestinal tract. Signals through PLCB2 and the calcium-regulated cation channel TRPM5. The polypeptide is Taste receptor type 2 member 103 (Rattus norvegicus (Rat)).